Reading from the N-terminus, the 231-residue chain is Probable intron-encoded endonuclease 1 (231 aa).

Belongs to the LAGLIDADG endonuclease family.

It is found in the mitochondrion. Functionally, endonuclease involved in mitochondrial 21S rRNA gene intron homing. The protein is Probable intron-encoded endonuclease 1 of Wickerhamomyces canadensis (Yeast).